Consider the following 255-residue polypeptide: 1-(5-phosphoribosyl)-5-[(5-phosphoribosylamino)methylideneamino] imidazole-4-carboxamide isomerase (255 aa).

The active-site Proton acceptor is D8. The active-site Proton donor is D129.

This sequence belongs to the HisA/HisF family.

Its subcellular location is the cytoplasm. The enzyme catalyses 1-(5-phospho-beta-D-ribosyl)-5-[(5-phospho-beta-D-ribosylamino)methylideneamino]imidazole-4-carboxamide = 5-[(5-phospho-1-deoxy-D-ribulos-1-ylimino)methylamino]-1-(5-phospho-beta-D-ribosyl)imidazole-4-carboxamide. It participates in amino-acid biosynthesis; L-histidine biosynthesis; L-histidine from 5-phospho-alpha-D-ribose 1-diphosphate: step 4/9. This Synechococcus sp. (strain CC9605) protein is 1-(5-phosphoribosyl)-5-[(5-phosphoribosylamino)methylideneamino] imidazole-4-carboxamide isomerase.